The primary structure comprises 328 residues: Endo-beta-1,4-glucanase B (328 aa).

Positions M1 to A17 are cleaved as a signal peptide. N-linked (GlcNAc...) asparagine glycosylation occurs at N95. The Proton donor role is filled by E155. The Nucleophile role is filled by E262.

The protein belongs to the glycosyl hydrolase 5 (cellulase A) family.

Its subcellular location is the secreted. It catalyses the reaction Endohydrolysis of (1-&gt;4)-beta-D-glucosidic linkages in cellulose, lichenin and cereal beta-D-glucans.. In terms of biological role, has endoglucanase activity on substrates containing beta-1,4 glycosidic bonds, like in carboxymethylcellulose (CMC), hydroxyethylcellulose (HEC) and beta-glucan. Involved in the degradation of complex natural cellulosic substrates. In Emericella nidulans (strain FGSC A4 / ATCC 38163 / CBS 112.46 / NRRL 194 / M139) (Aspergillus nidulans), this protein is Endo-beta-1,4-glucanase B (eglB).